Consider the following 575-residue polypeptide: FAD-dependent monooxygenase rstn6 (575 aa).

The signal sequence occupies residues 1–17; sequence MYDVIVIGAGWCGLVAA. An FAD-binding site is contributed by Ile106. N-linked (GlcNAc...) asparagine glycans are attached at residues Asn239 and Asn295.

It belongs to the FAD-binding monooxygenase family. It depends on FAD as a cofactor.

It participates in antifungal biosynthesis. In terms of biological role, FAD-dependent monooxygenase; part of the gene cluster that mediates the biosynthesis of the tetrahydropyranyl antifungal agent restricticin that acts as an inhibitor of CYP51 and blocks the ergosterol biosynthesis. The highly reducing polyketide synthase rstn3, the short chain dehydrogenase rstn4, the cyclase rstn5, the FAD-dependent monooxygenase rstn6 and the enoylreductase rstn7 are required to generate the first stable intermediate desmethylrestrictinol. Rstn3 with rstn7 biosynthesize the first polyketide chain intermediate that is reduced by rstn4, followed by epoxidation by rstn6 before 6-endo cyclization via epoxide opening by rstn5 leads to desmethylrestrictinol. The methyltransferase rstn1 then catalyzes the C4 O-methylation of desmethylrestrictinol to produce restrictinol, and the nonribosomal peptide synthetase rstn8 catalyzes the C3 esterification of restrictinol with glycine that leads to restricticin. This is FAD-dependent monooxygenase rstn6 from Aspergillus nomiae NRRL (strain ATCC 15546 / NRRL 13137 / CBS 260.88 / M93).